Here is a 346-residue protein sequence, read N- to C-terminus: DNA primase small subunit PriS (346 aa).

Active-site residues include Asp97, Asp99, and Asp280.

Belongs to the eukaryotic-type primase small subunit family. As to quaternary structure, heterodimer of a small subunit (PriS) and a large subunit (PriL). The cofactor is Mg(2+). It depends on Mn(2+) as a cofactor.

Catalytic subunit of DNA primase, an RNA polymerase that catalyzes the synthesis of short RNA molecules used as primers for DNA polymerase during DNA replication. The small subunit contains the primase catalytic core and has DNA synthesis activity on its own. Binding to the large subunit stabilizes and modulates the activity, increasing the rate of DNA synthesis while decreasing the length of the DNA fragments, and conferring RNA synthesis capability. The DNA polymerase activity may enable DNA primase to also catalyze primer extension after primer synthesis. May also play a role in DNA repair. The chain is DNA primase small subunit PriS from Thermococcus kodakarensis (strain ATCC BAA-918 / JCM 12380 / KOD1) (Pyrococcus kodakaraensis (strain KOD1)).